We begin with the raw amino-acid sequence, 156 residues long: Small ribosomal subunit protein uS7c (156 aa).

This sequence belongs to the universal ribosomal protein uS7 family. Part of the 30S ribosomal subunit.

The protein resides in the plastid. Its subcellular location is the cyanelle. In terms of biological role, one of the primary rRNA binding proteins, it binds directly to 16S rRNA where it nucleates assembly of the head domain of the 30S subunit. This Cyanophora paradoxa protein is Small ribosomal subunit protein uS7c (rps7).